Reading from the N-terminus, the 1015-residue chain is Probable beta-galactosidase B (1015 aa).

The N-terminal stretch at 1-21 is a signal peptide; sequence MAHIYRLLLLLLSNLWFSAAA. Residue Asn-23 is glycosylated (N-linked (GlcNAc...) asparagine). Substrate is bound at residue Tyr-90. The N-linked (GlcNAc...) asparagine glycan is linked to Asn-100. The substrate site is built by Asn-135, Ala-136, and Glu-137. Asn-172 is a glycosylation site (N-linked (GlcNAc...) asparagine). Residue Asn-195 participates in substrate binding. Glu-196 (proton donor) is an active-site residue. Asn-211 is a glycosylation site (N-linked (GlcNAc...) asparagine). Substrate is bound at residue Tyr-265. Cys-271 and Cys-324 are oxidised to a cystine. Glu-308 acts as the Nucleophile in catalysis. A substrate-binding site is contributed by Tyr-373. 9 N-linked (GlcNAc...) asparagine glycosylation sites follow: Asn-411, Asn-441, Asn-456, Asn-554, Asn-679, Asn-735, Asn-775, Asn-821, and Asn-878.

This sequence belongs to the glycosyl hydrolase 35 family.

Its subcellular location is the secreted. The enzyme catalyses Hydrolysis of terminal non-reducing beta-D-galactose residues in beta-D-galactosides.. Cleaves beta-linked terminal galactosyl residues from gangliosides, glycoproteins, and glycosaminoglycans. The chain is Probable beta-galactosidase B (lacB) from Neosartorya fischeri (strain ATCC 1020 / DSM 3700 / CBS 544.65 / FGSC A1164 / JCM 1740 / NRRL 181 / WB 181) (Aspergillus fischerianus).